Here is a 598-residue protein sequence, read N- to C-terminus: Phenylalanine--tRNA ligase beta subunit, cytoplasmic (598 aa).

Positions 303–383 constitute a B5 domain; sequence LAVYDMEVPL…IAYGFNNIPT (81 aa). Residues Asp361, Asp367, Glu370, and Asp371 each contribute to the Mg(2+) site.

This sequence belongs to the phenylalanyl-tRNA synthetase beta subunit family. Type 2 subfamily. Tetramer of two alpha and two beta subunits. Requires Mg(2+) as cofactor.

Its subcellular location is the cytoplasm. The protein localises to the cytosol. The enzyme catalyses tRNA(Phe) + L-phenylalanine + ATP = L-phenylalanyl-tRNA(Phe) + AMP + diphosphate + H(+). This is Phenylalanine--tRNA ligase beta subunit, cytoplasmic from Arabidopsis thaliana (Mouse-ear cress).